We begin with the raw amino-acid sequence, 98 residues long: U10-barytoxin-Tl1a (98 aa).

An N-terminal signal peptide occupies residues 1–21 (MKTLVLVAVLGVASLYLLSSA). The propeptide occupies 22–50 (SEVQQLSPAEEEFRAFVSTFGGLFETEER). 3 cysteine pairs are disulfide-bonded: cysteine 57/cysteine 71, cysteine 64/cysteine 76, and cysteine 70/cysteine 89.

It belongs to the neurotoxin 10 (Hwtx-1) family. 27 (ICK-3) subfamily. In terms of tissue distribution, expressed by the venom gland.

It localises to the secreted. Its function is as follows. Ion channel inhibitor. The protein is U10-barytoxin-Tl1a of Trittame loki (Brush-footed trapdoor spider).